We begin with the raw amino-acid sequence, 495 residues long: Neuronal acetylcholine receptor subunit beta-4 (495 aa).

Positions 1 to 20 are cleaved as a signal peptide; it reads MRGTPLLLVSLFSLLQDGDC. Over 21–235 the chain is Extracellular; the sequence is RLANAEEKLM…IIKRKPLFYT (215 aa). N-linked (GlcNAc...) asparagine glycosylation is found at N35, N92, N137, and N165. C152 and C166 are oxidised to a cystine. A helical transmembrane segment spans residues 236–256; it reads INLIIPCVLITSLAILVFYLP. Topologically, residues 257-264 are cytoplasmic; that stretch reads SDCGEKMT. E261 contributes to the Na(+) binding site. A helical membrane pass occupies residues 265 to 285; the sequence is LCISVLLALTFFLLLISKIVP. Topologically, residues 286–297 are extracellular; that stretch reads PTSLDIPLIGKY. The chain crosses the membrane as a helical span at residues 298–318; the sequence is LLFTMVLVTFSIVTTVCVLNV. Over 319 to 463 the chain is Cytoplasmic; sequence HHRSPSTHTM…WKFVAMVVDR (145 aa). Residues 464-484 traverse the membrane as a helical segment; the sequence is LFLWVFVFVCILGTMGLFLPP. The Extracellular portion of the chain corresponds to 485–495; it reads LFQIHAPSKDS.

It belongs to the ligand-gated ion channel (TC 1.A.9) family. Acetylcholine receptor (TC 1.A.9.1) subfamily. Beta-4/CHRNB4 sub-subfamily. Neuronal AChR is composed of two different types of subunits: alpha and beta. CHRNB4/Beta-4 subunit can be combined to CHRNA2/alpha-2, CHRNA3/alpha-3 or CHRNA4/alpha-4, CHRNA5/alpha-5 and CHRNB3/beta-3 to give rise to functional receptors. Forms stoichiometries such as (CHRNA3)2:(CHRNB4)3 or (CHRNA3:CHRNB4)2:CHRNB3. Interacts with RIC3; which is required for proper folding and assembly. Interacts with LYPD6. In terms of tissue distribution, in the brain, it is detected in the medial habenula. In the peripheral nervous system, it is found at least in the adrenal gland.

Its subcellular location is the synaptic cell membrane. The protein resides in the cell membrane. The catalysed reaction is Ca(2+)(in) = Ca(2+)(out). It catalyses the reaction K(+)(in) = K(+)(out). The enzyme catalyses Na(+)(in) = Na(+)(out). Activated by a myriad of ligands such as acetylcholine, cytisine, nicotine, choline and epibatidine. nAChR activity is inhibited by the antagonist alpha-conotoxins BuIA and MII, small disulfide-constrained peptides from cone snails. The heteropentamer CHRNA3:CHRNB4 activity is blocked by the alpha-conotoxin ImI and AuIB. Its function is as follows. Component of neuronal acetylcholine receptors (nAChRs) that function as pentameric, ligand-gated cation channels with high calcium permeability among other activities. nAChRs are excitatory neurotrasnmitter receptors formed by a collection of nAChR subunits known to mediate synaptic transmission in the nervous system and the neuromuscular junction. Each nAchR subunit confers differential attributes to channel properties, including activation, deactivation and desensitization kinetics, pH sensitivity, cation permeability, and binding to allosteric modulators. CHRNB4 forms heteropentameric neuronal acetylcholine receptors with CHRNA2, CHRNA3 and CHRNA4, as well as CHRNA5 and CHRNB3 as accesory subunits. CHRNA3:CHRNB4 being predominant in neurons of the autonomic ganglia, it is known as ganglionic nicotinic receptor. CHRNA3:CHRNB4 or CHRNA3:CHRNA5:CHRNB4 play also an important role in the habenulo-interpeduncular tract, modulating the mesolimbic dopamine system and affecting reward circuits and addiction. Hypothalamic CHRNA3:CHRNB4 nAChR activation by nicotine leads to activation of POMC neurons and a decrease in food intake. The polypeptide is Neuronal acetylcholine receptor subunit beta-4 (Chrnb4) (Rattus norvegicus (Rat)).